The primary structure comprises 710 residues: Gastrulation-defective protein 3 (710 aa).

A helical membrane pass occupies residues 597-615; it reads AYYVFTVLALIISNFPTIV.

The protein localises to the membrane. In Caenorhabditis elegans, this protein is Gastrulation-defective protein 3 (gadr-3).